The following is a 461-amino-acid chain: A-type ATP synthase subunit B (461 aa).

This sequence belongs to the ATPase alpha/beta chains family. Has multiple subunits with at least A(3), B(3), C, D, E, F, H, I and proteolipid K(x).

Its subcellular location is the cell membrane. Component of the A-type ATP synthase that produces ATP from ADP in the presence of a proton gradient across the membrane. The B chain is a regulatory subunit. This chain is A-type ATP synthase subunit B, found in Nitrosopumilus maritimus (strain SCM1).